Here is a 208-residue protein sequence, read N- to C-terminus: Urease accessory protein UreG 1 (208 aa).

A GTP-binding site is contributed by 14 to 21 (GPVGSGKT).

Belongs to the SIMIBI class G3E GTPase family. UreG subfamily. Homodimer. UreD, UreF and UreG form a complex that acts as a GTP-hydrolysis-dependent molecular chaperone, activating the urease apoprotein by helping to assemble the nickel containing metallocenter of UreC. The UreE protein probably delivers the nickel.

It is found in the cytoplasm. In terms of biological role, facilitates the functional incorporation of the urease nickel metallocenter. This process requires GTP hydrolysis, probably effectuated by UreG. Functionally, disruption of the ure1 gene cluster suggests that it protects brucellae during their passage through the stomach. The major route of infection in human brucellosis is oral. In Brucella abortus (strain 2308), this protein is Urease accessory protein UreG 1.